A 358-amino-acid chain; its full sequence is Mitogen-activated protein kinase 1 (358 aa).

The residue at position 2 (A2) is an N-acetylalanine. The Protein kinase domain maps to 23-311; sequence YTNLSYIGEG…VEQALAHPYL (289 aa). The residue at position 27 (S27) is a Phosphoserine; by SGK1. Residues 29-37 and K52 each bind ATP; that span reads IGEGAYGMV. The Proton acceptor role is filled by D147. Position 183 is a phosphothreonine; by MAP2K1 and MAP2K2 (T183). The TXY signature appears at 183-185; the sequence is TEY. Residue Y185 is modified to Phosphotyrosine; by MAP2K1 and MAP2K2. The residue at position 188 (T188) is a Phosphothreonine; by autocatalysis. S244, S246, and S282 each carry phosphoserine.

It belongs to the protein kinase superfamily. CMGC Ser/Thr protein kinase family. MAP kinase subfamily. As to quaternary structure, binds both upstream activators and downstream substrates in multimolecular complexes. This interaction inhibits its tyrosine-kinase activity. Interacts with ADAM15, ARHGEF2, ARRB2, DAPK1 (via death domain), HSF4, IER3, IPO7, NISCH, SGK1, and isoform 1 of NEK2. Interacts (via phosphorylated form) with TPR (via C-terminal region and phosphorylated form); the interaction requires dimerization of MAPK1/ERK2 and increases following EGF stimulation. Interacts with MAP2K1. Interacts with DUSP6. Interacts (phosphorylated form) with CAV2 ('Tyr-19'-phosphorylated form); the interaction, promoted by insulin, leads to nuclear location and MAPK1 activation. Interacts with DCC. Interacts with MORG1. Interacts with PEA15. Interacts with MKNK2. MKNK2 isoform 1 binding prevents from dephosphorylation and inactivation. The phosphorylated form interacts with PML. Interacts with STYX. Interacts with CDK2AP2. Interacts with CAVIN4. Interacts with DUSP7; the interaction enhances DUSP7 phosphatase activity. Interacts with GIT1; this interaction is necessary for MAPK1 localization to focal adhesions. Interacts with ZNF263. Interacts with phosphoglycerate kinase PGK1; the interaction is direct, occurs under hypoxic conditions, and promotes interaction between PGK1 and PIN1. Mg(2+) serves as cofactor. Post-translationally, dually phosphorylated on Thr-183 and Tyr-185, which activates the enzyme. Ligand-activated ALK induces tyrosine phosphorylation. Dephosphorylated by PTPRJ at Tyr-185. Phosphorylated upon FLT3 and KIT signaling. Dephosphorylated by DUSP1 and DUSP2 at Thr-183 and Tyr-185. In terms of processing, ISGylated. Ubiquitinated by TRIM15 via 'Lys-63'-linked ubiquitination; leading to activation. Deubiquitinated by CYLD. In terms of tissue distribution, widely expressed.

The protein resides in the cytoplasm. Its subcellular location is the cytoskeleton. The protein localises to the spindle. It localises to the nucleus. It is found in the microtubule organizing center. The protein resides in the centrosome. Its subcellular location is the membrane. The protein localises to the caveola. It localises to the cell junction. It is found in the focal adhesion. It catalyses the reaction L-seryl-[protein] + ATP = O-phospho-L-seryl-[protein] + ADP + H(+). The catalysed reaction is L-threonyl-[protein] + ATP = O-phospho-L-threonyl-[protein] + ADP + H(+). With respect to regulation, phosphorylated by MAP2K1/MEK1 and MAP2K2/MEK2 on Thr-183 and Tyr-185 in response to external stimuli like insulin or NGF. Both phosphorylations are required for activity. This phosphorylation causes dramatic conformational changes, which enable full activation and interaction of MAPK1/ERK2 with its substrates. Phosphorylation on Ser-27 by SGK1 results in its activation by enhancing its interaction with MAP2K1/MEK1 and MAP2K2/MEK2. Dephosphorylated and inactivated by DUSP1, DUSP3, DUSP6 and DUSP9. Inactivated by pyrimidylpyrrole inhibitors. Functionally, serine/threonine kinase which acts as an essential component of the MAP kinase signal transduction pathway. MAPK1/ERK2 and MAPK3/ERK1 are the 2 MAPKs which play an important role in the MAPK/ERK cascade. They participate also in a signaling cascade initiated by activated KIT and KITLG/SCF. Depending on the cellular context, the MAPK/ERK cascade mediates diverse biological functions such as cell growth, adhesion, survival and differentiation through the regulation of transcription, translation, cytoskeletal rearrangements. The MAPK/ERK cascade also plays a role in initiation and regulation of meiosis, mitosis, and postmitotic functions in differentiated cells by phosphorylating a number of transcription factors. About 160 substrates have already been discovered for ERKs. Many of these substrates are localized in the nucleus, and seem to participate in the regulation of transcription upon stimulation. However, other substrates are found in the cytosol as well as in other cellular organelles, and those are responsible for processes such as translation, mitosis and apoptosis. Moreover, the MAPK/ERK cascade is also involved in the regulation of the endosomal dynamics, including lysosome processing and endosome cycling through the perinuclear recycling compartment (PNRC); as well as in the fragmentation of the Golgi apparatus during mitosis. The substrates include transcription factors (such as ATF2, BCL6, ELK1, ERF, FOS, HSF4 or SPZ1), cytoskeletal elements (such as CANX, CTTN, GJA1, MAP2, MAPT, PXN, SORBS3 or STMN1), regulators of apoptosis (such as BAD, BTG2, CASP9, DAPK1, IER3, MCL1 or PPARG), regulators of translation (such as EIF4EBP1 and FXR1) and a variety of other signaling-related molecules (like ARHGEF2, DCC, FRS2 or GRB10). Protein kinases (such as RAF1, RPS6KA1/RSK1, RPS6KA3/RSK2, RPS6KA2/RSK3, RPS6KA6/RSK4, SYK, MKNK1/MNK1, MKNK2/MNK2, RPS6KA5/MSK1, RPS6KA4/MSK2, MAPKAPK3 or MAPKAPK5) and phosphatases (such as DUSP1, DUSP4, DUSP6 or DUSP16) are other substrates which enable the propagation the MAPK/ERK signal to additional cytosolic and nuclear targets, thereby extending the specificity of the cascade. Mediates phosphorylation of TPR in response to EGF stimulation. May play a role in the spindle assembly checkpoint. Phosphorylates PML and promotes its interaction with PIN1, leading to PML degradation. Phosphorylates CDK2AP2. Phosphorylates phosphoglycerate kinase PGK1 under hypoxic conditions to promote its targeting to the mitochondrion and suppress the formation of acetyl-coenzyme A from pyruvate. In terms of biological role, acts as a transcriptional repressor. Binds to a [GC]AAA[GC] consensus sequence. Repress the expression of interferon gamma-induced genes. Seems to bind to the promoter of CCL5, DMP1, IFIH1, IFITM1, IRF7, IRF9, LAMP3, OAS1, OAS2, OAS3 and STAT1. Transcriptional activity is independent of kinase activity. In Mus musculus (Mouse), this protein is Mitogen-activated protein kinase 1.